The primary structure comprises 170 residues: Transcriptional repressor NrdR (170 aa).

The segment at 3 to 34 (CPFCRHPDSRVVDSRVTDDGTAIRRRRSCPEC) is a zinc-finger region. The ATP-cone domain maps to 46–136 (LSVIKRSGVI…VYRGFESLED (91 aa)). The tract at residues 151-170 (ERSETVERGRPVPSRGVDDR) is disordered.

The protein belongs to the NrdR family. Zn(2+) serves as cofactor.

In terms of biological role, negatively regulates transcription of bacterial ribonucleotide reductase nrd genes and operons by binding to NrdR-boxes. This chain is Transcriptional repressor NrdR, found in Acidothermus cellulolyticus (strain ATCC 43068 / DSM 8971 / 11B).